A 541-amino-acid polypeptide reads, in one-letter code: Eukaryotic translation initiation factor 3 subunit L (541 aa).

Residues 308-516 (TFSDILLYIQ…IHIADTKVSH (209 aa)) form the PCI domain.

It belongs to the eIF-3 subunit L family. In terms of assembly, component of the eukaryotic translation initiation factor 3 (eIF-3) complex. The eIF-3 complex interacts with pix.

It is found in the cytoplasm. Component of the eukaryotic translation initiation factor 3 (eIF-3) complex, which is involved in protein synthesis of a specialized repertoire of mRNAs and, together with other initiation factors, stimulates binding of mRNA and methionyl-tRNAi to the 40S ribosome. The eIF-3 complex specifically targets and initiates translation of a subset of mRNAs involved in cell proliferation. The protein is Eukaryotic translation initiation factor 3 subunit L of Drosophila pseudoobscura pseudoobscura (Fruit fly).